Reading from the N-terminus, the 577-residue chain is Thiol:disulfide interchange protein DsbD (577 aa).

A signal peptide spans 1-23 (MAQRIFTLIFLLWTAVGTPQVAA). 2 disulfides stabilise this stretch: C131/C137 and C194/C316. 7 helical membrane passes run 182–202 (ALLI…YPLI), 225–245 (YVQG…AAGL), 255–275 (YILI…FGLY), 308–328 (LAGL…LLYI), 338–358 (GGTL…VTLF), 369–389 (WMQY…VFLL), and 396–416 (AWGI…ALML). Residues 437 to 577 (VISAKPLQDW…FQAHLQKFSP (141 aa)) form the Thioredoxin domain. A disulfide bridge links C492 with C495.

It belongs to the thioredoxin family. DsbD subfamily.

Its subcellular location is the cell inner membrane. The enzyme catalyses [protein]-dithiol + NAD(+) = [protein]-disulfide + NADH + H(+). It carries out the reaction [protein]-dithiol + NADP(+) = [protein]-disulfide + NADPH + H(+). Its function is as follows. Required to facilitate the formation of correct disulfide bonds in some periplasmic proteins and for the assembly of the periplasmic c-type cytochromes. Acts by transferring electrons from cytoplasmic thioredoxin to the periplasm. This transfer involves a cascade of disulfide bond formation and reduction steps. The chain is Thiol:disulfide interchange protein DsbD from Pectobacterium atrosepticum (strain SCRI 1043 / ATCC BAA-672) (Erwinia carotovora subsp. atroseptica).